A 1018-amino-acid polypeptide reads, in one-letter code: Ubiquitin carboxyl-terminal hydrolase 35 (1018 aa).

In terms of domain architecture, USP spans 441 to 926 (IGLINLGNTC…TAYVLFYRQR (486 aa)). Catalysis depends on C450, which acts as the Nucleophile. Disordered stretches follow at residues 544–566 (QKLKQSSSPSPPEEPPAPSSTSV) and 610–757 (RLGS…GSEG). Residues 552–561 (PSPPEEPPAP) are compositionally biased toward pro residues. S613 bears the Phosphoserine mark. 3 stretches are compositionally biased toward basic and acidic residues: residues 673 to 691 (QEERIEREEEGKEERTEKE), 699 to 709 (STRGEGEREKE), and 718 to 728 (KVEKETEKEAE). H862 acts as the Proton acceptor in catalysis. Residues 984–1011 (HWGRGFDEDKDEDEGSPGGCNPAGGNGG) form a disordered region. A compositionally biased stretch (gly residues) spans 999–1011 (SPGGCNPAGGNGG).

It belongs to the peptidase C19 family. As to quaternary structure, homodimer (via C-terminal region). Interacts with HSP90AA1. In terms of processing, ubiquitinated by CHIP/STUB1 in an HSP90-dependent manner; leading to proteasomal degradation. This ubiquitination can be reversed through auto-deubiquitinating activity. Expressed in testis, pancreas and skeletal muscle.

It is found in the cytoplasm. Its subcellular location is the mitochondrion. It carries out the reaction Thiol-dependent hydrolysis of ester, thioester, amide, peptide and isopeptide bonds formed by the C-terminal Gly of ubiquitin (a 76-residue protein attached to proteins as an intracellular targeting signal).. In terms of biological role, deubiquitinase that plays a role in different processes including cell cycle regulation, mitophagy or endoplasmic reticulum stress. Inhibits TNFalpha-induced NF-kappa-B activation through stabilizing TNIP2 protein via deubiquitination. Plays an essential role during mitosis by deubiquitinating and thereby regulating the levels of Aurora B/AURKB protein. In addition, regulates the protein levels of other key component of the chromosomal passenger complex (CPC) such as survivin/BIRC5 or Borealin/CDCA8 by enhancing their stability. Regulates the degradation of mitochondria through the process of autophagy termed mitophagy. The chain is Ubiquitin carboxyl-terminal hydrolase 35 (USP35) from Homo sapiens (Human).